Reading from the N-terminus, the 211-residue chain is MVNCIIKNWQGEEVGQATLELKVAKEENAAHIVHRALVRQQTNARQGTASTKTRAEVRGGGRKPWRQKGTGRARAGSIRSPLWRGGGVTFGPKPKDFNVKMNRKERRLALRTALDSRIEDLIVVENFAEQLTQPKTKELVSALTRWGIDGNQKVVLIVSEITDNIQLSARNVPYIKLLKADGLNVYDLLVADKIVATAEALSKVQEVYSDS.

Residues 41 to 52 (QTNARQGTASTK) show a composition bias toward polar residues. The tract at residues 41–78 (QTNARQGTASTKTRAEVRGGGRKPWRQKGTGRARAGSI) is disordered. Over residues 60–71 (GGRKPWRQKGTG) the composition is skewed to basic residues.

The protein belongs to the universal ribosomal protein uL4 family. In terms of assembly, part of the 50S ribosomal subunit.

Its function is as follows. One of the primary rRNA binding proteins, this protein initially binds near the 5'-end of the 23S rRNA. It is important during the early stages of 50S assembly. It makes multiple contacts with different domains of the 23S rRNA in the assembled 50S subunit and ribosome. Functionally, forms part of the polypeptide exit tunnel. This Rippkaea orientalis (strain PCC 8801 / RF-1) (Cyanothece sp. (strain PCC 8801)) protein is Large ribosomal subunit protein uL4.